A 556-amino-acid chain; its full sequence is Arginine--tRNA ligase (556 aa).

A 'HIGH' region motif is present at residues Ala132–His142.

This sequence belongs to the class-I aminoacyl-tRNA synthetase family. In terms of assembly, monomer.

The protein resides in the cytoplasm. It catalyses the reaction tRNA(Arg) + L-arginine + ATP = L-arginyl-tRNA(Arg) + AMP + diphosphate. The sequence is that of Arginine--tRNA ligase from Listeria monocytogenes serovar 1/2a (strain ATCC BAA-679 / EGD-e).